A 672-amino-acid polypeptide reads, in one-letter code: DNA ligase (672 aa).

Residues 37 to 41, 86 to 87, and Glu-115 contribute to the NAD(+) site; these read DAEYD and SL. Lys-117 (N6-AMP-lysine intermediate) is an active-site residue. Positions 138, 172, 288, and 312 each coordinate NAD(+). Residues Cys-406, Cys-409, Cys-424, and Cys-429 each contribute to the Zn(2+) site. One can recognise a BRCT domain in the interval 590–672; the sequence is DISSTFAGKT…LQEIQQSKQV (83 aa).

The protein belongs to the NAD-dependent DNA ligase family. LigA subfamily. Requires Mg(2+) as cofactor. It depends on Mn(2+) as a cofactor.

It catalyses the reaction NAD(+) + (deoxyribonucleotide)n-3'-hydroxyl + 5'-phospho-(deoxyribonucleotide)m = (deoxyribonucleotide)n+m + AMP + beta-nicotinamide D-nucleotide.. DNA ligase that catalyzes the formation of phosphodiester linkages between 5'-phosphoryl and 3'-hydroxyl groups in double-stranded DNA using NAD as a coenzyme and as the energy source for the reaction. It is essential for DNA replication and repair of damaged DNA. The sequence is that of DNA ligase from Anoxybacillus flavithermus (strain DSM 21510 / WK1).